The sequence spans 738 residues: Ethylene receptor (738 aa).

Transmembrane regions (helical) follow at residues 23–43 (ISDFFIALAYFSIPLELIYFV), 54–74 (VLVQFGAFIVLCGATHLINLW), and 89–109 (IAKVLTAVVSCATALMLVHII). Cu cation contacts are provided by Cys-65 and His-69. A GAF domain is found at 158–307 (DRHTILRTTL…VVADQVAVAL (150 aa)). The 240-residue stretch at 350 to 589 (VMNHEMRTPM…IFIVKLGIPE (240 aa)) folds into the Histidine kinase domain. His-353 bears the Phosphohistidine; by autocatalysis mark. Residues 615–730 (KVLLMDDNGV…KMRSVLSDLL (116 aa)) form the Response regulatory domain. 4-aspartylphosphate is present on Asp-663.

The protein belongs to the ethylene receptor family. As to quaternary structure, homodimer; disulfide-linked. Cu cation is required as a cofactor. Activation probably requires a transfer of a phosphate group between a His in the transmitter domain and an Asp of the receiver domain. Higher expression in arils than in seeds.

It is found in the endoplasmic reticulum membrane. It carries out the reaction ATP + protein L-histidine = ADP + protein N-phospho-L-histidine.. In terms of biological role, may act early in the ethylene signal transduction pathway, possibly as an ethylene receptor, or as a regulator of the pathway. This chain is Ethylene receptor (ETR1), found in Passiflora edulis (Passion fruit).